The chain runs to 180 residues: Segregation and condensation protein B (180 aa).

This sequence belongs to the ScpB family. As to quaternary structure, homodimer. Homodimerization may be required to stabilize the binding of ScpA to the Smc head domains. Component of a cohesin-like complex composed of ScpA, ScpB and the Smc homodimer, in which ScpA and ScpB bind to the head domain of Smc. The presence of the three proteins is required for the association of the complex with DNA.

It is found in the cytoplasm. Functionally, participates in chromosomal partition during cell division. May act via the formation of a condensin-like complex containing Smc and ScpA that pull DNA away from mid-cell into both cell halves. The polypeptide is Segregation and condensation protein B (Staphylococcus aureus (strain MSSA476)).